We begin with the raw amino-acid sequence, 203 residues long: A-type ATP synthase subunit E (203 aa).

This sequence belongs to the V-ATPase E subunit family. Has multiple subunits with at least A(3), B(3), C, D, E, F, H, I and proteolipid K(x).

The protein resides in the cell membrane. Functionally, component of the A-type ATP synthase that produces ATP from ADP in the presence of a proton gradient across the membrane. The protein is A-type ATP synthase subunit E of Methanococcus maripaludis (strain DSM 14266 / JCM 13030 / NBRC 101832 / S2 / LL).